The following is a 122-amino-acid chain: Large ribosomal subunit protein uL14 (122 aa).

This sequence belongs to the universal ribosomal protein uL14 family. Part of the 50S ribosomal subunit. Forms a cluster with proteins L3 and L19. In the 70S ribosome, L14 and L19 interact and together make contacts with the 16S rRNA in bridges B5 and B8.

In terms of biological role, binds to 23S rRNA. Forms part of two intersubunit bridges in the 70S ribosome. The polypeptide is Large ribosomal subunit protein uL14 (Pseudomonas fluorescens (strain ATCC BAA-477 / NRRL B-23932 / Pf-5)).